We begin with the raw amino-acid sequence, 127 residues long: Histone H2B type 1-A (127 aa).

The segment at 1-32 (MPEVSAKGTTISKKGFKKAVTKTQKKEGRKRK) is disordered. Proline 2 bears the N-acetylproline mark. N6-acetyllysine; alternate is present on residues lysine 7, lysine 13, lysine 14, lysine 17, lysine 18, lysine 22, and lysine 25. 8 positions are modified to N6-crotonyllysine; alternate: lysine 7, lysine 13, lysine 14, lysine 17, lysine 18, lysine 22, lysine 25, and lysine 36. N6-lactoyllysine; alternate occurs at positions 7 and 13. Residue lysine 7 forms a Glycyl lysine isopeptide (Lys-Gly) (interchain with G-Cter in SUMO2); alternate linkage. N6-lactoyllysine; alternate occurs at positions 17, 18, 22, and 25. Lysine 22 participates in a covalent cross-link: Glycyl lysine isopeptide (Lys-Gly) (interchain with G-Cter in SUMO2); alternate. Lysine 36 carries the post-translational modification N6-succinyllysine; alternate. Residue lysine 36 forms a Glycyl lysine isopeptide (Lys-Gly) (interchain with G-Cter in ubiquitin); alternate linkage. Residue serine 38 is modified to Phosphoserine. Residue lysine 45 is modified to N6-lactoyllysine; alternate. An N6-methyllysine modification is found at lysine 48. The residue at position 59 (lysine 59) is an N6,N6-dimethyllysine. A Dimethylated arginine modification is found at arginine 81. An N6-acetyllysine; alternate modification is found at lysine 87. Lysine 87 is modified (N6-lactoyllysine; alternate). Lysine 87 is modified (N6,N6,N6-trimethyllysine; alternate). Residues arginine 88 and arginine 94 each carry the omega-N-methylarginine modification. N6-lactoyllysine; alternate is present on lysine 110. Lysine 110 carries the N6-methyllysine modification. A Phosphothreonine modification is found at threonine 117. N6-lactoyllysine; alternate occurs at positions 118 and 122. Residues lysine 118 and lysine 122 each carry the N6-succinyllysine; alternate modification. Residue lysine 118 is modified to N6-methylated lysine; alternate. Residue lysine 122 forms a Glycyl lysine isopeptide (Lys-Gly) (interchain with G-Cter in ubiquitin); alternate linkage.

Belongs to the histone H2B family. In terms of assembly, the nucleosome is a histone octamer containing two molecules each of H2A, H2B, H3 and H4 assembled in one H3-H4 heterotetramer and two H2A-H2B heterodimers. In terms of processing, monoubiquitination at Lys-36 by the MSL1/MSL2 dimer is required for histone H3 'Lys-4' (H3K4me) and 'Lys-79' (H3K79me) methylation and transcription activation at specific gene loci, such as HOXA9 and MEIS1 loci. Similarly, monoubiquitination of Lys-122 (H2BK120Ub) by the RNF20/40 complex gives a specific tag for epigenetic transcriptional activation and is also prerequisite for histone H3 'Lys-4' and 'Lys-79' methylation. It also functions cooperatively with the FACT dimer to stimulate elongation by RNA polymerase II. H2BK120Ub also acts as a regulator of mRNA splicing: deubiquitination by USP49 is required for efficient cotranscriptional splicing of a large set of exons. Post-translationally, crotonylation (Kcr) is specifically present in male germ cells and marks testis-specific genes in post-meiotic cells, including X-linked genes that escape sex chromosome inactivation in haploid cells. Crotonylation marks active promoters and enhancers and confers resistance to transcriptional repressors. It is also associated with post-meiotically activated genes on autosomes. Acetylated during spermatogenesis. Acetylated form is most abundant in spermatogonia compared to spermatocytes and round spermatids. In terms of processing, phosphorylated at Thr-117 in spermatogonia, spermatocytes and round spermatids. Post-translationally, methylated at Lys-118 in spermatogonia, spermatocytes and round spermatids. Lactylated in macrophages by EP300/P300 by using lactoyl-CoA directly derived from endogenous or exogenous lactate, leading to stimulates gene transcription. As to expression, testis. Expressed in pachytene spermatocytes during meiotic prophase I in the absence of any significant DNA synthesis.

Its subcellular location is the nucleus. It is found in the chromosome. Variant histone specifically required to direct the transformation of dissociating nucleosomes to protamine in male germ cells. Entirely replaces classical histone H2B prior nucleosome to protamine transition and probably acts as a nucleosome dissociating factor that creates a more dynamic chromatin, facilitating the large-scale exchange of histones. Core component of nucleosome. Nucleosomes wrap and compact DNA into chromatin, limiting DNA accessibility to the cellular machineries which require DNA as a template. Histones thereby play a central role in transcription regulation, DNA repair, DNA replication and chromosomal stability. DNA accessibility is regulated via a complex set of post-translational modifications of histones, also called histone code, and nucleosome remodeling. In Rattus norvegicus (Rat), this protein is Histone H2B type 1-A.